The sequence spans 204 residues: Holliday junction branch migration complex subunit RuvA (204 aa).

Residues 1-64 (MIGRLRGILL…EDAQLLYGFN (64 aa)) are domain I. A domain II region spans residues 65-143 (TVKERALFRE…GWGAGDLFTP (79 aa)). Residues 144–155 (FTDAAPTDSAAA) form a flexible linker region. The domain III stretch occupies residues 156-204 (SSNSAEEEAVSALLALGYKPTQASKVVSQIAKPDMSSEQLIREALKSMV).

This sequence belongs to the RuvA family. Homotetramer. Forms an RuvA(8)-RuvB(12)-Holliday junction (HJ) complex. HJ DNA is sandwiched between 2 RuvA tetramers; dsDNA enters through RuvA and exits via RuvB. An RuvB hexamer assembles on each DNA strand where it exits the tetramer. Each RuvB hexamer is contacted by two RuvA subunits (via domain III) on 2 adjacent RuvB subunits; this complex drives branch migration. In the full resolvosome a probable DNA-RuvA(4)-RuvB(12)-RuvC(2) complex forms which resolves the HJ.

The protein resides in the cytoplasm. The RuvA-RuvB-RuvC complex processes Holliday junction (HJ) DNA during genetic recombination and DNA repair, while the RuvA-RuvB complex plays an important role in the rescue of blocked DNA replication forks via replication fork reversal (RFR). RuvA specifically binds to HJ cruciform DNA, conferring on it an open structure. The RuvB hexamer acts as an ATP-dependent pump, pulling dsDNA into and through the RuvAB complex. HJ branch migration allows RuvC to scan DNA until it finds its consensus sequence, where it cleaves and resolves the cruciform DNA. This chain is Holliday junction branch migration complex subunit RuvA, found in Vibrio parahaemolyticus serotype O3:K6 (strain RIMD 2210633).